The sequence spans 1364 residues: RecQ-like DNA helicase BLM (1364 aa).

Disordered regions lie at residues 108 to 131 and 147 to 174; these read VHGN…TGIN and DDFD…KNTS. Residues 328 to 377 form a necessary for dimerization and homooligomerization region; that stretch reads DSKVPSQLLTLMLEICDLVDKIPISELHVLSCGLDLKKKRDMRKRLLSND. Disordered regions lie at residues 380–416, 484–515, and 535–580; these read FRSS…ESLS, RFNT…NPDL, and SPAA…SLLS. Low complexity predominate over residues 387-399; that stretch reads SSTVSLTSCTSST. Polar residues predominate over residues 484 to 503; that stretch reads RFNTPQNEKPISSSTCTRPY. Residues 555–566 show a composition bias toward basic and acidic residues; sequence AQLDSRNKEKNT. Polar residues predominate over residues 567–580; it reads RNNTGDTTNPSLLS. ATP-binding positions include 620–624 and 644–648; these read FRTNQ and GGGKS. A Helicase ATP-binding domain is found at 628–803; that stretch reads INACLCGEDC…LNQLKMTKPQ (176 aa). Positions 747 to 750 match the DEAH box motif; it reads DEAH. 2 3' overhang DNA-binding regions span residues 822–825 and 849–851; these read KPKR and SRH. In terms of domain architecture, Helicase C-terminal spans 829–976; the sequence is DCVEWIKKHH…TKQTHFNNLY (148 aa). R934 contributes to the ATP binding site. The tract at residues 952–955 is 3' overhang DNA-binding; it reads RIRR. 4 residues coordinate Zn(2+): C988, C1007, C1015, and C1018. Residues 1046-1090 form a DNA Holliday junction binding region; the sequence is LVQGRGKGRSNNTRLTLNMMVDIFLGSKSAKIQTGLFGKGAAYSR. 3' overhang DNA-binding stretches follow at residues 1061–1063, 1072–1076, and 1111–1117; these read TLN, SKSAK, and YITFNDQ. One can recognise an HRDC domain in the interval 1164-1244; that stretch reads EEMVKKCQAE…QKYSEWTLPV (81 aa). Positions 1179–1196 are necessary for ssDNA and DNA Holliday junction binding; that stretch reads KRLGKIFGVHYFNIFNTA. N1194 contacts ATP. A disordered region spans residues 1251–1364; it reads SGGPANVSAR…RFLKPSYSMF (114 aa). Positions 1273–1282 are enriched in polar residues; it reads KSSYFSSNNK. Over residues 1283–1300 the composition is skewed to basic residues; sequence KGPKRKNSSYFGKSKKRK. A Nuclear localization signal motif is present at residues 1285-1301; it reads PKRKNSSYFGKSKKRKT. Positions 1306-1335 are enriched in polar residues; the sequence is QQSRSKNGNSSYARKNSTAKTSSSYISGSK.

Belongs to the helicase family. RecQ subfamily. As to quaternary structure, monomer. Homodimer (via N-terminus). Homotetramer (via N-terminus); dimer of dimers. Homohexamer (via N-terminus). Self-association negatively regulates DNA unwinding amplitude and rate. Oligomer complexes dissociate into monomer in presence of ATP. The cofactor is Zn(2+).

The protein resides in the nucleus. It carries out the reaction Couples ATP hydrolysis with the unwinding of duplex DNA by translocating in the 3'-5' direction.. The enzyme catalyses ATP + H2O = ADP + phosphate + H(+). ATP-dependent DNA helicase that unwinds single- and double-stranded DNA in a 3'-5' direction. Participates in DNA replication and repair. Involved in 5'-end resection of DNA during double-strand break (DSB) repair. Negatively regulates sister chromatid exchange (SCE). Stimulates DNA 4-way junction branch migration and DNA Holliday junction dissolution. Binds single-stranded DNA (ssDNA), forked duplex DNA and DNA Holliday junction. The polypeptide is RecQ-like DNA helicase BLM (blm) (Xenopus laevis (African clawed frog)).